The chain runs to 95 residues: N(2)-fixation sustaining protein CowN (95 aa).

Belongs to the CowN family.

In terms of biological role, is required to sustain N(2)-dependent growth in the presence of low levels of carbon monoxide (CO). Probably acts by protecting the N(2) fixation ability of the nitrogenase complex, which is inactivated in the presence of CO. The polypeptide is N(2)-fixation sustaining protein CowN (Allochromatium vinosum (strain ATCC 17899 / DSM 180 / NBRC 103801 / NCIMB 10441 / D) (Chromatium vinosum)).